The chain runs to 429 residues: Bifunctional protein GlmU (429 aa).

Residues 1 to 223 (MKTSILILAA…EDEFMGINDK (223 aa)) form a pyrophosphorylase region. UDP-N-acetyl-alpha-D-glucosamine-binding positions include 8–11 (LAAG), Lys22, and 81–82 (GT). Asp102 lines the Mg(2+) pocket. UDP-N-acetyl-alpha-D-glucosamine-binding residues include Gly135, Glu149, Asn164, and Asn221. Asn221 is a Mg(2+) binding site. Residues 224–244 (FELSIAENFMQEKIKKYWMQQ) are linker. The interval 245–429 (GVIFHLPQST…KDYYYKKFQK (185 aa)) is N-acetyltransferase. Arg308 and Lys325 together coordinate UDP-N-acetyl-alpha-D-glucosamine. His336 functions as the Proton acceptor in the catalytic mechanism. Tyr339 and Asn350 together coordinate UDP-N-acetyl-alpha-D-glucosamine. Acetyl-CoA contacts are provided by residues 359 to 360 (NY), Ser378, Ala396, and Arg413.

In the N-terminal section; belongs to the N-acetylglucosamine-1-phosphate uridyltransferase family. This sequence in the C-terminal section; belongs to the transferase hexapeptide repeat family. As to quaternary structure, homotrimer. Mg(2+) serves as cofactor.

The protein resides in the cytoplasm. The catalysed reaction is alpha-D-glucosamine 1-phosphate + acetyl-CoA = N-acetyl-alpha-D-glucosamine 1-phosphate + CoA + H(+). It carries out the reaction N-acetyl-alpha-D-glucosamine 1-phosphate + UTP + H(+) = UDP-N-acetyl-alpha-D-glucosamine + diphosphate. It participates in nucleotide-sugar biosynthesis; UDP-N-acetyl-alpha-D-glucosamine biosynthesis; N-acetyl-alpha-D-glucosamine 1-phosphate from alpha-D-glucosamine 6-phosphate (route II): step 2/2. Its pathway is nucleotide-sugar biosynthesis; UDP-N-acetyl-alpha-D-glucosamine biosynthesis; UDP-N-acetyl-alpha-D-glucosamine from N-acetyl-alpha-D-glucosamine 1-phosphate: step 1/1. It functions in the pathway bacterial outer membrane biogenesis; LPS lipid A biosynthesis. Its function is as follows. Catalyzes the last two sequential reactions in the de novo biosynthetic pathway for UDP-N-acetylglucosamine (UDP-GlcNAc). The C-terminal domain catalyzes the transfer of acetyl group from acetyl coenzyme A to glucosamine-1-phosphate (GlcN-1-P) to produce N-acetylglucosamine-1-phosphate (GlcNAc-1-P), which is converted into UDP-GlcNAc by the transfer of uridine 5-monophosphate (from uridine 5-triphosphate), a reaction catalyzed by the N-terminal domain. The sequence is that of Bifunctional protein GlmU from Campylobacter jejuni (strain RM1221).